Here is a 321-residue protein sequence, read N- to C-terminus: Beta-ketoacyl-[acyl-carrier-protein] synthase III (321 aa).

Catalysis depends on residues Cys-116 and His-248. Residues 249-253 form an ACP-binding region; that stretch reads QANLR. Residue Asn-278 is part of the active site.

The protein belongs to the thiolase-like superfamily. FabH family. Homodimer.

The protein resides in the cytoplasm. The enzyme catalyses malonyl-[ACP] + acetyl-CoA + H(+) = 3-oxobutanoyl-[ACP] + CO2 + CoA. The protein operates within lipid metabolism; fatty acid biosynthesis. Functionally, catalyzes the condensation reaction of fatty acid synthesis by the addition to an acyl acceptor of two carbons from malonyl-ACP. Catalyzes the first condensation reaction which initiates fatty acid synthesis and may therefore play a role in governing the total rate of fatty acid production. Possesses both acetoacetyl-ACP synthase and acetyl transacylase activities. Its substrate specificity determines the biosynthesis of branched-chain and/or straight-chain of fatty acids. This chain is Beta-ketoacyl-[acyl-carrier-protein] synthase III, found in Yersinia enterocolitica serotype O:8 / biotype 1B (strain NCTC 13174 / 8081).